The primary structure comprises 636 residues: Molybdenum cofactor biosynthesis protein 1 (636 aa).

The molybdenum cofactor biosynthesis protein A stretch occupies residues Met-1–Ile-383. Residues Arg-19 to Arg-40 are disordered. Position 64 is a phosphoserine (Ser-64). A Radical SAM core domain is found at Ser-64 to Glu-279. Residue Arg-73 participates in GTP binding. [4Fe-4S] cluster contacts are provided by Cys-80 and Cys-84. An S-adenosyl-L-methionine-binding site is contributed by Tyr-86. Cys-87 is a [4Fe-4S] cluster binding site. Arg-123 lines the GTP pocket. S-adenosyl-L-methionine is bound at residue Gly-127. A GTP-binding site is contributed by Thr-154. Ser-178 serves as a coordination point for S-adenosyl-L-methionine. Residue Lys-198 is modified to N6-acetyllysine. Lys-215 is a binding site for GTP. Met-249 contacts S-adenosyl-L-methionine. Positions 312 and 315 each coordinate [4Fe-4S] cluster. Residue Arg-317 to Arg-319 participates in GTP binding. Cys-329 serves as a coordination point for [4Fe-4S] cluster. Residues Gln-414–Ala-636 form a molybdenum cofactor biosynthesis protein C region. The segment at Ser-444 to His-484 is disordered. An N6-acetyllysine modification is found at Lys-528. The For molybdenum cofactor biosynthesis protein C activity role is filled by Asp-606.

The protein in the C-terminal section; belongs to the MoaC family. In the N-terminal section; belongs to the radical SAM superfamily. MoaA family. In terms of assembly, isoform Mocs1a and isoform Mocs1b probably form a heterooligomer. [4Fe-4S] cluster is required as a cofactor.

The enzyme catalyses GTP + AH2 + S-adenosyl-L-methionine = (8S)-3',8-cyclo-7,8-dihydroguanosine 5'-triphosphate + 5'-deoxyadenosine + L-methionine + A + H(+). It catalyses the reaction (8S)-3',8-cyclo-7,8-dihydroguanosine 5'-triphosphate = cyclic pyranopterin phosphate + diphosphate. The protein operates within cofactor biosynthesis; molybdopterin biosynthesis. Isoform Mocs1a and isoform Mocs1b probably form a complex that catalyzes the conversion of 5'-GTP to cyclic pyranopterin monophosphate (cPMP). Mocs1a catalyzes the cyclization of GTP to (8S)-3',8-cyclo-7,8-dihydroguanosine 5'-triphosphate and Mocs1b catalyzes the subsequent conversion of (8S)-3',8-cyclo-7,8-dihydroguanosine 5'-triphosphate to cPMP. The chain is Molybdenum cofactor biosynthesis protein 1 (Mocs1) from Mus musculus (Mouse).